The sequence spans 250 residues: Triosephosphate isomerase (250 aa).

Residue 9–11 (NWK) participates in substrate binding. H96 acts as the Electrophile in catalysis. E168 functions as the Proton acceptor in the catalytic mechanism. Substrate-binding positions include G174, S216, and 237–238 (GG).

This sequence belongs to the triosephosphate isomerase family. In terms of assembly, homodimer.

Its subcellular location is the cytoplasm. It catalyses the reaction D-glyceraldehyde 3-phosphate = dihydroxyacetone phosphate. It functions in the pathway carbohydrate biosynthesis; gluconeogenesis. The protein operates within carbohydrate degradation; glycolysis; D-glyceraldehyde 3-phosphate from glycerone phosphate: step 1/1. Functionally, involved in the gluconeogenesis. Catalyzes stereospecifically the conversion of dihydroxyacetone phosphate (DHAP) to D-glyceraldehyde-3-phosphate (G3P). The sequence is that of Triosephosphate isomerase from Leptospira interrogans serogroup Icterohaemorrhagiae serovar Lai (strain 56601).